The chain runs to 91 residues: Co-chaperonin GroES (91 aa).

It belongs to the GroES chaperonin family. In terms of assembly, heptamer of 7 subunits arranged in a ring. Interacts with the chaperonin GroEL.

The protein localises to the cytoplasm. Functionally, together with the chaperonin GroEL, plays an essential role in assisting protein folding. The GroEL-GroES system forms a nano-cage that allows encapsulation of the non-native substrate proteins and provides a physical environment optimized to promote and accelerate protein folding. GroES binds to the apical surface of the GroEL ring, thereby capping the opening of the GroEL channel. This is Co-chaperonin GroES from Oenococcus oeni (strain ATCC BAA-331 / PSU-1).